A 181-amino-acid chain; its full sequence is MFGLKQFYQNEVRAKLAQELDIKNPMLLPKLEKIVISVGAGAHAKDMKIMQNIAQTISLVAGQKAVITKAKKSVAGFKIREGMAVGAKVTLRNKRMYNFLEKLIVISLPRVKDFRGISRNGFDGRGNYTFGINEQLIFPEVVYDDIMVSHGMNITMVTSTDNDKEAFKLLELLGLPFAKVR.

It belongs to the universal ribosomal protein uL5 family. Part of the 50S ribosomal subunit; part of the 5S rRNA/L5/L18/L25 subcomplex. Contacts the 5S rRNA and the P site tRNA. Forms a bridge to the 30S subunit in the 70S ribosome.

Its function is as follows. This is one of the proteins that bind and probably mediate the attachment of the 5S RNA into the large ribosomal subunit, where it forms part of the central protuberance. In the 70S ribosome it contacts protein S13 of the 30S subunit (bridge B1b), connecting the 2 subunits; this bridge is implicated in subunit movement. Contacts the P site tRNA; the 5S rRNA and some of its associated proteins might help stabilize positioning of ribosome-bound tRNAs. This is Large ribosomal subunit protein uL5 from Helicobacter pylori (strain J99 / ATCC 700824) (Campylobacter pylori J99).